A 619-amino-acid chain; its full sequence is MITWHDLYTVLTAVIPLYVAMILAYGSVRWWKIFSPDQCSGINRFVAIFAVPLLSFHFISSNNPYAMNLRFIAADTLQKLIMLTLLIIWANFTRSGSLEWSITIFSLSTLPNTLVMGIPLLIAMYGEYSGSLMVQIVVLQCIIWYTLLLFLFEYRGAKILIMEQFPETGASIVSFKVESDVVSLDGHDFLETDAQIGDDGKLHVTVRKSNASRRSFYGGGGTNMTPRPSNLTGAEIYSLNTTPRGSNFNHSDFYSMMGFPGGRLSNFGPADMYSVQSSRGPTPRPSNFEESCAMASSPRFGYYPGGAPGSYPAPNPEFSTGNKTGSKAPKENHHHVGKSNSNDAKELHMFVWGSNGSPVSDRAGLQVDNGANEQVGKSDQGGAKEIRMLISDHTQNGENKAGPMNGDYGGEEESERVKEVPNGLHKLRCNSTAELNPKEAIETGETVPVKHMPPASVMTRLILIMVWRKLIRNPNTYSSLIGLIWALVAFRWDVAMPKIIQQSISILSDAGLGMAMFSLGLFMALQPKLIACGNSTATFAMAVRFFTGPAVMAVAAMAIGLRGDLLRVAIVQAALPQGIVPFVFAKEYNVHPAILSTGVIFGMLIALPITLVYYILLGL.

Residues 1-7 lie on the Extracellular side of the membrane; the sequence is MITWHDL. The helical transmembrane segment at 8 to 28 threads the bilayer; it reads YTVLTAVIPLYVAMILAYGSV. Topologically, residues 29 to 38 are cytoplasmic; sequence RWWKIFSPDQ. A helical membrane pass occupies residues 39 to 59; sequence CSGINRFVAIFAVPLLSFHFI. Val-51 contacts (indol-3-yl)acetate. Over 60–71 the chain is Extracellular; the sequence is SSNNPYAMNLRF. The helical transmembrane segment at 72 to 92 threads the bilayer; the sequence is IAADTLQKLIMLTLLIIWANF. Residues 93–101 are Cytoplasmic-facing; the sequence is TRSGSLEWS. Residues 102 to 122 form a helical membrane-spanning segment; sequence ITIFSLSTLPNTLVMGIPLLI. (indol-3-yl)acetate-binding residues include Asn-112 and Leu-114. The Extracellular portion of the chain corresponds to 123–131; that stretch reads AMYGEYSGS. A helical transmembrane segment spans residues 132–152; the sequence is LMVQIVVLQCIIWYTLLLFLF. Tyr-145 contributes to the (indol-3-yl)acetate binding site. Topologically, residues 153–479 are cytoplasmic; the sequence is EYRGAKILIM…LIRNPNTYSS (327 aa). Residues Ser-229, Ser-246, and Ser-286 each carry the phosphoserine modification. The disordered stretch occupies residues 306 to 340; it reads GAPGSYPAPNPEFSTGNKTGSKAPKENHHHVGKSN. Thr-320 carries the phosphothreonine modification. Position 357 is a phosphoserine (Ser-357). The disordered stretch occupies residues 393–413; that stretch reads HTQNGENKAGPMNGDYGGEEE. The helical transmembrane segment at 480–500 threads the bilayer; that stretch reads LIGLIWALVAFRWDVAMPKII. The Extracellular portion of the chain corresponds to 501–503; sequence QQS. A helical transmembrane segment spans residues 504–524; it reads ISILSDAGLGMAMFSLGLFMA. Residues 525-538 are Cytoplasmic-facing; that stretch reads LQPKLIACGNSTAT. A helical transmembrane segment spans residues 539–559; it reads FAMAVRFFTGPAVMAVAAMAI. The Extracellular portion of the chain corresponds to 560-564; the sequence is GLRGD. Residues 565-585 traverse the membrane as a helical segment; it reads LLRVAIVQAALPQGIVPFVFA. Residues Ile-579 and Val-580 each coordinate (indol-3-yl)acetate. The Cytoplasmic segment spans residues 586–598; the sequence is KEYNVHPAILSTG. A helical membrane pass occupies residues 599-619; it reads VIFGMLIALPITLVYYILLGL.

Belongs to the auxin efflux carrier (TC 2.A.69.1) family. As to quaternary structure, homodimer.

The protein resides in the cell membrane. Its function is as follows. Acts as a component of the auxin efflux carrier. Mediates the initial auxin gradient which contributes to the establishment of the apical-basal axis in early embryogenesis. Together with PIN3 and PIN4, involved in the connective auxin transport (CAT) that ensures communication across the shoot system, and modulates strigolactone-mediated shoot branching control. The abcb19 pin3 pin4 pin7 quadruple mutant exhibits an additive phenotype on strigolactone-mediated bud outgrowth responses and shoot branching control. The sequence is that of Auxin efflux carrier component 7 from Arabidopsis thaliana (Mouse-ear cress).